Reading from the N-terminus, the 515-residue chain is MDEFHRCGKEDSFWQQCFLYPLFFQEDLYAISHDHYLDVSSSSRPMEHLSSNDQLSFLTVKRLIGQIRQQNHSIVLFVNCDPNPLADRKKSFYSESVLEALTLVLEVPFSIWSKSSVEGMNECKSFRSIHSIFPFLEDKFPHSNSILDARIPYSIHPEILVRTFRRWIRDAPSLHPLRSVLYDYRNSPENLQRSIIVVPRVNTRFFLFLLNYYVCECESILFSRLKRSSHSRSLSHGSFPQRTHFHRSIKHIIIFSRRNSLKSIWSLKDPKIHYVRYGERPIIAIKGADLLVKKCRYYLLIFRQFYFHLWSEPYRVCSHQLSKNCSSSPGYFLRVRMNPLLVRTKTLDELFIPVLITNEMDPIVPIVPIIGLLATEKFCDISGRPISKLSWTSLTDDDILDRFDQIWRNLFHYYSGSFDRDGLYRIKYILLLSCAKTLACKHKSTIRVVRKELGPELFKKSFSKEREFDSLPFSSKAAARSQRERIWHSDIPQINPLANSWQKIQDLKIENLFDQ.

The protein belongs to the intron maturase 2 family. MatK subfamily.

The protein localises to the plastid. It localises to the chloroplast. Its function is as follows. Usually encoded in the trnK tRNA gene intron. Probably assists in splicing its own and other chloroplast group II introns. In Pinus uncinata (Mountain pine), this protein is Maturase K.